A 706-amino-acid chain; its full sequence is K(+)-insensitive pyrophosphate-energized proton pump (706 aa).

Transmembrane regions (helical) follow at residues 1–21 (MTALWLIVLCGVLSVVYAIWA), 62–82 (IVIFVLLVYFLGFYVAIGFAI), 83–103 (GAILSGAAGFIGMNVSVRANV), 128–148 (GMLVAGLALLGVTLYFGFLVY), and 164–184 (VALGFGASLISIFARLGGGIF). K186 is a substrate binding site. Residues D189, D193, N216, and D219 each contribute to the Mg(2+) site. 6 helical membrane-spanning segments follow: residues 231-251 (LFETYAVTAVATMVLAAIFFA), 261-281 (TLPLAIGGICIITSIIGTFFV), 298-318 (IATGVLSLIGIAVVIYTLIGF), 328-348 (GMSLFECGVVGLIVTALIIWI), 376-398 (IQGLAISMEATALPAIVIIAGIL), and 412-432 (ATATMLALAGMIVALDAFGPV). Mg(2+) is bound at residue D434. 4 helical membrane-spanning segments follow: residues 465–485 (AVTKGYAIGSAGLGALVLFAA), 516–536 (YVVVGLLFGGLLPYLFGAMGM), 585–605 (IIPSLLPVLSPIVVYFLIYAI), and 616–636 (AFSAVGAMLLGVIVTGLFVAI). Residues D646, D672, and D676 each contribute to the Ca(2+) site. K679 provides a ligand contact to substrate. A helical transmembrane segment spans residues 685–705 (AVNPMIKITNIVALLLLAILA).

The protein belongs to the H(+)-translocating pyrophosphatase (TC 3.A.10) family. K(+)-insensitive subfamily. As to quaternary structure, homodimer. Mg(2+) serves as cofactor.

The protein localises to the cell inner membrane. It carries out the reaction diphosphate + H2O + H(+)(in) = 2 phosphate + 2 H(+)(out). Functionally, proton pump that utilizes the energy of pyrophosphate hydrolysis as the driving force for proton movement across the membrane. Generates a proton motive force. The chain is K(+)-insensitive pyrophosphate-energized proton pump from Bradyrhizobium diazoefficiens (strain JCM 10833 / BCRC 13528 / IAM 13628 / NBRC 14792 / USDA 110).